A 98-amino-acid chain; its full sequence is NADH-ubiquinone oxidoreductase chain 4L (98 aa).

The next 3 membrane-spanning stretches (helical) occupy residues 2–22 (PSISTNIILAFITALLGMLIF), 29–49 (SLLCLEGMMLSMFILSTLTIL), and 61–81 (ILLLVFAACEAAVGLALLVTV).

It belongs to the complex I subunit 4L family. In terms of assembly, core subunit of respiratory chain NADH dehydrogenase (Complex I) which is composed of 45 different subunits.

The protein resides in the mitochondrion inner membrane. The catalysed reaction is a ubiquinone + NADH + 5 H(+)(in) = a ubiquinol + NAD(+) + 4 H(+)(out). In terms of biological role, core subunit of the mitochondrial membrane respiratory chain NADH dehydrogenase (Complex I) which catalyzes electron transfer from NADH through the respiratory chain, using ubiquinone as an electron acceptor. Part of the enzyme membrane arm which is embedded in the lipid bilayer and involved in proton translocation. In Eulemur mongoz (Mongoose lemur), this protein is NADH-ubiquinone oxidoreductase chain 4L (MT-ND4L).